The chain runs to 266 residues: Leucine-rich repeat-containing protein 3 (266 aa).

A signal peptide spans 1-38 (MTFPAGAYVLRKVFIPHGCPLIFRLLLAVICLSVPSFA). One can recognise an LRRNT domain in the interval 39–70 (CPKSCHCSERNSLTVVQCSSRNLEEIPPDLPH). LRR repeat units lie at residues 71–92 (DTVS…AFKN), 95–116 (WLQE…AFKG), and 120–141 (SLRT…AFAR). Positions 151–204 (NPWHCECTLQEVLRELRLDPETVNEVSCHTSDQEKYAGKPVIQVLDSGINFCNF) constitute an LRRCT domain. Residues 211–231 (VAMFVTMFGWFTMVIAYVIYY) traverse the membrane as a helical segment.

It belongs to the LRRC3 family.

It is found in the membrane. In Danio rerio (Zebrafish), this protein is Leucine-rich repeat-containing protein 3 (lrrc3).